The primary structure comprises 38 residues: Toxin Bot33 (38 aa).

3 disulfide bridges follow: C8/C28, C14/C33, and C18/C35.

This sequence belongs to the short scorpion toxin superfamily. Potassium channel inhibitor family. Expressed by the venom gland.

Its subcellular location is the secreted. A probable toxin that has no activity on the tested mammalian voltage-gated potassium channels (when tested at 1 uM) and is not toxic to mice. It resembles alpha toxins that block voltage-gated potassium channels. The chain is Toxin Bot33 from Buthus occitanus tunetanus (Common European scorpion).